A 519-amino-acid chain; its full sequence is Cytochrome P450 52A10 (519 aa).

Cysteine 466 is a heme binding site.

Belongs to the cytochrome P450 family. The cofactor is heme.

The protein resides in the membrane. In terms of biological role, together with an NADPH cytochrome P450 the enzyme system catalyzes the terminal hydroxylation as the first step in the assimilation of alkanes and fatty acids. The chain is Cytochrome P450 52A10 (CYP52A10) from Candida maltosa (Yeast).